We begin with the raw amino-acid sequence, 34 residues long: uncharacterized protein (34 aa).

A helical membrane pass occupies residues 10-30 (LIITSSFFAIAVVLVLSVLLI).

It localises to the membrane. This is an uncharacterized protein from Shigella flexneri.